Here is a 346-residue protein sequence, read N- to C-terminus: T-box protein 12 (346 aa).

Over residues 33 to 48 (DEEDVEVDVEDVDDVD) the composition is skewed to acidic residues. A disordered region spans residues 33–66 (DEEDVEVDVEDVDDVDLSSIPSKSPERSRGRPKI). The T-box DNA-binding region spans 86-268 (LWAKFFDLGT…KNPFAKGFRD (183 aa)).

The protein localises to the nucleus. Transcription factor. Involved in cell fate determination; required to pattern the posterior hindgut. Involved in motor neuron fate determination and maintenance, acting as a transcriptional repressor to counteract gene activation by transcription factor unc-3 in a subset of motor neurons. Required throughout development to repress transcription by unc-3, probably acting by binding to specific promoter elements. Represses expression of VA and VB motor neuron-specific effector genes, such as DEG/ENaC channel del-1 and the innexin inx-12, in DA and DB motor neurons. Represses expression of transcription factor bnc-1, perhaps acting directly, in DA and DB motor neurons. The chain is T-box protein 12 (mab-9) from Caenorhabditis elegans.